The sequence spans 431 residues: Citrate synthase (431 aa).

Residues histidine 306 and aspartate 364 contribute to the active site.

The protein belongs to the citrate synthase family.

It carries out the reaction oxaloacetate + acetyl-CoA + H2O = citrate + CoA + H(+). Its pathway is carbohydrate metabolism; tricarboxylic acid cycle; isocitrate from oxaloacetate: step 1/2. The protein is Citrate synthase (gltA) of Bartonella henselae (strain ATCC 49882 / DSM 28221 / CCUG 30454 / Houston 1) (Rochalimaea henselae).